Here is a 329-residue protein sequence, read N- to C-terminus: NAC domain-containing protein 79 (329 aa).

An NAC domain is found at 17–167 (LPPGFRFHPT…EWVICRVFHK (151 aa)). The DNA-binding element occupies 114-173 (VGMKKTLVFYRGRAPKGQKTNWVMHEYRLDGKLSAHNLPKTAKNEWVICRVFHKTAGGKK).

Expressed at low levels in leaves.

It localises to the nucleus. The sequence is that of NAC domain-containing protein 79 from Arabidopsis thaliana (Mouse-ear cress).